The chain runs to 205 residues: Small ribosomal subunit protein uS4 (205 aa).

Positions methionine 1–glycine 16 are enriched in basic and acidic residues. A disordered region spans residues methionine 1–serine 46. Positions serine 94 to valine 157 constitute an S4 RNA-binding domain.

It belongs to the universal ribosomal protein uS4 family. Part of the 30S ribosomal subunit. Contacts protein S5. The interaction surface between S4 and S5 is involved in control of translational fidelity.

In terms of biological role, one of the primary rRNA binding proteins, it binds directly to 16S rRNA where it nucleates assembly of the body of the 30S subunit. With S5 and S12 plays an important role in translational accuracy. The chain is Small ribosomal subunit protein uS4 from Sinorhizobium medicae (strain WSM419) (Ensifer medicae).